A 218-amino-acid chain; its full sequence is uncharacterized protein (218 aa).

2 helical membrane-spanning segments follow: residues 14–34 (CLLS…YFTS) and 175–195 (LIIP…LALV).

This sequence to H.pylori HP0270.

Its subcellular location is the cell membrane. This is an uncharacterized protein from Rickettsia prowazekii (strain Madrid E).